A 174-amino-acid chain; its full sequence is Secreted protein A (174 aa).

Residues 1–19 (MRLLITLFAIFALFNCSLA) form the signal peptide. Asparagine 156 carries N-linked (GlcNAc...) asparagine glycosylation.

It belongs to the Sct family. In terms of processing, probably contains disulfide bonds.

Its subcellular location is the secreted. It localises to the extracellular vesicle. This is Secreted protein A (p17) from Dictyostelium discoideum (Social amoeba).